We begin with the raw amino-acid sequence, 486 residues long: BTB/POZ domain and ankyrin repeat-containing protein NBCL (486 aa).

A BTB domain is found at 25-115; it reads SDVTFSVEGR…LYSGQVSIVP (91 aa). The C2HC NPR-type zinc finger occupies 121–135; the sequence is RPNCGERGCWHTHCS. Zn(2+) is bound by residues Cys124, Cys129, His131, and Cys134. 4 ANK repeats span residues 257–286, 287–316, 321–350, and 354–388; these read QKIR…LNLD, EALA…DVNY, AGKT…DPNV, and DNVT…KLRL. Disordered regions lie at residues 403 to 441 and 464 to 486; these read EEGN…NNHN and QMSD…HHDY. Low complexity-rich tracts occupy residues 406–418 and 432–441; these read NANN…TTTT and SSSSSGNNHN. Residues 466–475 are compositionally biased toward basic and acidic residues; that stretch reads SDDHGGRHGD.

The protein belongs to the plant 'ANKYRIN-BTB/POZ' family. 'NOOT-BOP-COCH-like' (NBCL) subfamily. In terms of assembly, homodimer.

The protein localises to the nucleus. It is found in the cytoplasm. The protein resides in the cell membrane. It functions in the pathway protein modification; protein ubiquitination. Its function is as follows. May act as a substrate-specific adapter of an E3 ubiquitin-protein ligase complex (CUL3-RBX1-BTB) which mediates the ubiquitination and subsequent proteasomal degradation of target proteins. Transcriptional co-regulator involved in the promotion of leaf and floral meristem fate and determinacy. Necessary for the development of stipules at the base of petioles. Required for the abscission of senescent organs, probably by regulating the cell wall disorganization in abscission zones (AZs, e.g. pulvini at the base of leaves). Promotes slightly root-cap border cells separation from the root tip. Involved in the coordination of the symbiotic nodule developmental program; promotes the formation of root nodules by interacting directly with APP1 to modulate the expression of the nuclear transcription factor Y subunit (NF-YA1), a key nodulin. Necessary for the robust maintenance of nodule identity throughout the nodule developmental program. This Lupinus angustifolius (Narrow-leaved blue lupine) protein is BTB/POZ domain and ankyrin repeat-containing protein NBCL.